The following is a 203-amino-acid chain: Endoplasmic reticulum transmembrane protein 3 (203 aa).

At 1-6 (MSLYYT) the chain is on the lumenal side. The chain crosses the membrane as a helical span at residues 7 to 27 (LVFAILVVEIFMFSILALPIP). Over 28 to 45 (SRYRRPLTLLLLKPFKSS) the chain is Cytoplasmic. Residues 46-66 (TVQVAIKCVLGFILLLFIDCI) traverse the membrane as a helical segment. Over 67 to 110 (NRVYSIDKELQLSSASQNNGAIIAQDRIEVLSRKFFAQRNMYLT) the chain is Lumenal. Residues 111–131 (GITLFLTFVVVRTFGLVIELL) form a helical membrane-spanning segment. Topologically, residues 132–203 (TMKDIYRASP…KSESLQEEIN (72 aa)) are cytoplasmic. The tract at residues 142 to 171 (PVASSDVKKNDSVTAEAAAQSGASKDDHGD) is disordered.

This sequence belongs to the BCAP29/BCAP31 family.

It is found in the endoplasmic reticulum membrane. May play a role in anterograde transport of membrane proteins from the endoplasmic reticulum to the Golgi. May be involved in invertase secretion. The protein is Endoplasmic reticulum transmembrane protein 3 (YET3) of Saccharomyces cerevisiae (strain ATCC 204508 / S288c) (Baker's yeast).